A 395-amino-acid polypeptide reads, in one-letter code: S-adenosylmethionine synthase (395 aa).

Position 18 (His18) interacts with ATP. Asp20 serves as a coordination point for Mg(2+). Glu46 provides a ligand contact to K(+). L-methionine contacts are provided by Glu59 and Gln103. The interval 103–113 is flexible loop; that stretch reads QSVDIAVGVDA. Residues 170–172, 235–236, Asp244, 250–251, Ala267, and Lys271 each bind ATP; these read DAK, KF, and RK. Asp244 contributes to the L-methionine binding site. Lys275 lines the L-methionine pocket.

Belongs to the AdoMet synthase family. Homotetramer; dimer of dimers. It depends on Mg(2+) as a cofactor. K(+) is required as a cofactor.

The protein localises to the cytoplasm. It catalyses the reaction L-methionine + ATP + H2O = S-adenosyl-L-methionine + phosphate + diphosphate. The protein operates within amino-acid biosynthesis; S-adenosyl-L-methionine biosynthesis; S-adenosyl-L-methionine from L-methionine: step 1/1. Functionally, catalyzes the formation of S-adenosylmethionine (AdoMet) from methionine and ATP. The overall synthetic reaction is composed of two sequential steps, AdoMet formation and the subsequent tripolyphosphate hydrolysis which occurs prior to release of AdoMet from the enzyme. This is S-adenosylmethionine synthase from Acidiphilium cryptum (strain JF-5).